The primary structure comprises 255 residues: Putative glycyl-radical enzyme activating enzyme MJ1632 (255 aa).

Residues 30–245 (SHISLSDKIT…SNVSCSLDFK (216 aa)) form the Radical SAM core domain. [4Fe-4S] cluster is bound by residues C45, C49, and C52. Residues 51 to 53 (YCF), G88, and 134 to 136 (DLK) contribute to the S-adenosyl-L-methionine site.

It belongs to the organic radical-activating enzymes family. It depends on [4Fe-4S] cluster as a cofactor.

The catalysed reaction is glycyl-[protein] + reduced [flavodoxin] + S-adenosyl-L-methionine = glycin-2-yl radical-[protein] + semiquinone [flavodoxin] + 5'-deoxyadenosine + L-methionine + H(+). This is Putative glycyl-radical enzyme activating enzyme MJ1632 from Methanocaldococcus jannaschii (strain ATCC 43067 / DSM 2661 / JAL-1 / JCM 10045 / NBRC 100440) (Methanococcus jannaschii).